The following is a 648-amino-acid chain: Indolepyruvate oxidoreductase subunit IorA (648 aa).

4Fe-4S ferredoxin-type domains lie at 585–614 (PIYQ…WDAE) and 616–645 (KKAR…KVRE). 8 residues coordinate [4Fe-4S] cluster: Cys-594, Cys-597, Cys-600, Cys-606, Cys-625, Cys-628, Cys-631, and Cys-635.

As to quaternary structure, heterodimer of the IorA and IorB subunits. Requires [4Fe-4S] cluster as cofactor.

The enzyme catalyses indole-3-pyruvate + 2 oxidized [2Fe-2S]-[ferredoxin] + CoA = (indol-3-yl)acetyl-CoA + 2 reduced [2Fe-2S]-[ferredoxin] + CO2 + H(+). Its function is as follows. Catalyzes the ferredoxin-dependent oxidative decarboxylation of arylpyruvates. This Pyrococcus horikoshii (strain ATCC 700860 / DSM 12428 / JCM 9974 / NBRC 100139 / OT-3) protein is Indolepyruvate oxidoreductase subunit IorA (iorA).